We begin with the raw amino-acid sequence, 370 residues long: ATP/GTP phosphatase (370 aa).

It carries out the reaction ATP + H2O = ADP + phosphate + H(+). It catalyses the reaction GTP + H2O = GDP + phosphate + H(+). Has nucleotide phosphatase activity toward ATP and GTP, but not toward CTP, TTP and ADP. This Helicobacter pylori (strain ATCC 700392 / 26695) (Campylobacter pylori) protein is ATP/GTP phosphatase.